A 169-amino-acid polypeptide reads, in one-letter code: Ribosome maturation factor RimP (169 aa).

It belongs to the RimP family.

It is found in the cytoplasm. In terms of biological role, required for maturation of 30S ribosomal subunits. The sequence is that of Ribosome maturation factor RimP from Streptomyces avermitilis (strain ATCC 31267 / DSM 46492 / JCM 5070 / NBRC 14893 / NCIMB 12804 / NRRL 8165 / MA-4680).